We begin with the raw amino-acid sequence, 230 residues long: Heptaprenylglyceryl phosphate synthase (230 aa).

A sn-glycerol 1-phosphate-binding site is contributed by Lys-12. Asp-14 and Thr-40 together coordinate Mg(2+). Residues 159–164 (YIEYSG), Gly-189, and 209–210 (GD) contribute to the sn-glycerol 1-phosphate site.

Belongs to the GGGP/HepGP synthase family. Group I subfamily. Homodimer. Mg(2+) serves as cofactor.

It catalyses the reaction sn-glycerol 1-phosphate + all-trans-heptaprenyl diphosphate = 3-heptaprenyl-sn-glycero-1-phosphate + diphosphate. It participates in membrane lipid metabolism; glycerophospholipid metabolism. Its function is as follows. Prenyltransferase that catalyzes in vivo the transfer of the heptaprenyl moiety of heptaprenyl pyrophosphate (HepPP; 35 carbon atoms) to the C3 hydroxyl of sn-glycerol-1-phosphate (G1P), producing heptaprenylglyceryl phosphate (HepGP). This reaction is an ether-bond-formation step in the biosynthesis of archaea-type G1P-based membrane lipids found in Bacillales. This chain is Heptaprenylglyceryl phosphate synthase, found in Staphylococcus aureus (strain JH1).